The sequence spans 264 residues: tRNA (guanine-N(1)-)-methyltransferase (264 aa).

S-adenosyl-L-methionine is bound by residues Gly125 and 145 to 150 (LGDFVL).

It belongs to the RNA methyltransferase TrmD family. In terms of assembly, homodimer.

It localises to the cytoplasm. It carries out the reaction guanosine(37) in tRNA + S-adenosyl-L-methionine = N(1)-methylguanosine(37) in tRNA + S-adenosyl-L-homocysteine + H(+). In terms of biological role, specifically methylates guanosine-37 in various tRNAs. The chain is tRNA (guanine-N(1)-)-methyltransferase from Burkholderia mallei (strain NCTC 10247).